Here is a 391-residue protein sequence, read N- to C-terminus: Trehalose-phosphate phosphatase (391 aa).

The active-site Nucleophile is D147. D147, D149, and D330 together coordinate Mg(2+). Residue 147–149 coordinates substrate; the sequence is DFD.

The protein belongs to the trehalose phosphatase family. Requires Mg(2+) as cofactor.

The catalysed reaction is alpha,alpha-trehalose 6-phosphate + H2O = alpha,alpha-trehalose + phosphate. It participates in glycan biosynthesis; trehalose biosynthesis. Its function is as follows. Removes the phosphate from trehalose 6-phosphate to produce free trehalose. The sequence is that of Trehalose-phosphate phosphatase (otsB) from Mycolicibacterium paratuberculosis (strain ATCC BAA-968 / K-10) (Mycobacterium paratuberculosis).